Here is a 798-residue protein sequence, read N- to C-terminus: General transcription and DNA repair factor IIH helicase/translocase subunit XPB (798 aa).

2 disordered regions span residues 1–62 and 235–254; these read MGPP…EQIN and PPGATDKPTPDPAAAAGADG. The short motif at 6-22 is the Nuclear localization signal element; that stretch reads KSRKDRSGGDKFGKKRR. Basic and acidic residues predominate over residues 10-25; sequence DRSGGDKFGKKRRAED. Residues 33–42 show a composition bias toward acidic residues; sequence DDNDSLDATE. The 162-residue stretch at 343–504 folds into the Helicase ATP-binding domain; it reads MFGNGRARSG…DLNFLIGPKL (162 aa). 360-367 is an ATP binding site; it reads AGKSLVGV. The DEVH box signature appears at 457-460; the sequence is DEVH. Residues 558–713 form the Helicase C-terminal domain; the sequence is RSCQFLIKYH…KVITHLKGMD (156 aa). The segment at 746–765 is disordered; that stretch reads LPGEPGYRPSGSGGAVRRVG.

It belongs to the helicase family. RAD25/XPB subfamily. Component of the 7-subunit TFIIH core complex composed of haywire/XPB/ERCC3, XPD/ERCC2, GTF2H1, GTF2H2, GTF2H3, GTF2H4 and GTF2H5, which is active in NER. The core complex associates with the 3-subunit CDK-activating kinase (CAK) module composed of CCNH/cyclin H, CDK7 and MNAT1 to form the 10-subunit holoenzyme (holo-TFIIH) active in transcription. Interacts with PUF60. Interacts with ATF7IP. Interacts with Epstein-Barr virus EBNA2.

It is found in the nucleus. It carries out the reaction Couples ATP hydrolysis with the unwinding of duplex DNA by translocating in the 3'-5' direction.. The catalysed reaction is ATP + H2O = ADP + phosphate + H(+). ATP-dependent 3'-5' DNA helicase/translocase; binds dsDNA rather than ssDNA, unzipping it in a translocase rather than classical helicase activity. Component of the general transcription and DNA repair factor IIH (TFIIH) core complex. When complexed to CDK-activating kinase (CAK), involved in RNA transcription by RNA polymerase II. The ATPase activity of XPB/ERCC3, but not its helicase activity, is required for DNA opening; it may wrap around the damaged DNA wedging it open, causing localized melting and twisting that allows XPD/ERCC2 helicase to anchor. The ATP-dependent helicase activity of XPB/ERCC3 may be required for promoter escape. Also involved in transcription-coupled nucleotide excision repair (NER) of damaged DNA. In NER, TFIIH acts by opening DNA around the lesion to allow the excision of the damaged oligonucleotide and its replacement by a new DNA fragment. The structure of the TFIIH transcription complex differs from the NER-TFIIH complex; large movements by XPD/ERCC2 and XPB/ERCC3 are stabilized by XPA. This is General transcription and DNA repair factor IIH helicase/translocase subunit XPB (hay) from Drosophila melanogaster (Fruit fly).